A 375-amino-acid chain; its full sequence is Serpentine receptor class alpha-39 (375 aa).

7 helical membrane-spanning segments follow: residues 17-37, 51-71, 99-119, 138-158, 183-203, 236-256, and 275-295; these read LFAI…LFII, LVFL…LTAW, IRGT…GILL, LGTI…FILL, VYVM…VHLV, TPLL…VSVF, and LFIM…ELWL.

It belongs to the nematode receptor-like protein sra family.

It localises to the membrane. In Caenorhabditis elegans, this protein is Serpentine receptor class alpha-39 (sra-39).